Reading from the N-terminus, the 219-residue chain is UPF0502 protein Swoo_2055 (219 aa).

Positions 167 to 195 (QVKGESVPISEHSRSQREAPSKRQDEMDE) are disordered. The segment covering 177–191 (EHSRSQREAPSKRQD) has biased composition (basic and acidic residues).

The protein belongs to the UPF0502 family.

This Shewanella woodyi (strain ATCC 51908 / MS32) protein is UPF0502 protein Swoo_2055.